A 165-amino-acid chain; its full sequence is Probable bacterial non-heme ferritin-like protein (165 aa).

In terms of domain architecture, Ferritin-like diiron spans 1–145 (MLSENVVKLL…SILDKLNFLG (145 aa)). Fe cation contacts are provided by Glu17, Glu50, His53, Glu94, and Gln127.

It belongs to the ferritin family. Prokaryotic subfamily.

It localises to the cytoplasm. The chain is Probable bacterial non-heme ferritin-like protein (ftnB) from Haemophilus influenzae (strain ATCC 51907 / DSM 11121 / KW20 / Rd).